A 1657-amino-acid polypeptide reads, in one-letter code: Androglobin (1657 aa).

Over residues 1 to 11 (MASKQAKRKEV) the composition is skewed to basic residues. 2 disordered regions span residues 1–40 (MASK…SFEQ) and 321–398 (TKEN…SSDV). The region spanning 70–402 (KDKTAKSPIF…RPSSDVQYSM (333 aa)) is the Calpain catalytic domain. Residues 321-386 (TKENKDGKDG…DGEKEKEKFK (66 aa)) are compositionally biased toward basic and acidic residues. Residues 762-889 (HVCSMTTFVI…EDVSLAEWVD (128 aa)) enclose the Globin; C-terminal part domain. The heme b site is built by Q791 and H823. Residues 905–934 (EIAAAVKIQSMWKGCYVRLLMKARKPETKE) form the IQ domain. The Globin; N-terminal part domain occupies 935–967 (NVTVADTLQKIWAVLEMNLEQYALSLLRLMFKS). 4 disordered regions span residues 1184-1226 (SKQV…TDTG), 1288-1356 (KHEE…QEDP), 1422-1459 (TTDT…ADIK), and 1638-1657 (IEKK…GKKK). Over residues 1321–1336 (EKSAEKEKLAKEKQAP) the composition is skewed to basic and acidic residues. Composition is skewed to polar residues over residues 1341 to 1351 (QQVQMPTAVHS) and 1422 to 1443 (TTDT…SQTK). Residues 1585 to 1640 (DEVLEMYGEMRDSVDEARQKILDIREVYRNKLLEAERLRMEALAAQEAAVKIEIEK) adopt a coiled-coil conformation.

It in the central section; belongs to the globin family. This sequence in the N-terminal section; belongs to the peptidase C2 family. As to quaternary structure, interacts with septin SEPT10; contributes to in vitro proteolytic cleavage of SEPT10 in a calmodulin-dependent manner. Interacts with CFAP69. Interacts with SPEF2. May interact with calmodulin. Strongly expressed in testis and lung. Weakly expressed in heart, brain, spleen, kidney and tongue.

The protein resides in the cell projection. It is found in the cilium. Its subcellular location is the flagellum. In terms of biological role, probable chimeric globin with a bis-histidyl six-coordinate heme-iron atom through which it could bind dioxygen, carbon monoxide and nitric oxide. Required for sperm flagellum formation and maturation of elongating spermatids, thus playing an essential role in male fertility. The sequence is that of Androglobin from Mus musculus (Mouse).